Reading from the N-terminus, the 444-residue chain is Abhydrolase domain-containing protein abhd-5.2 (444 aa).

The 248-residue stretch at 162–409 folds into the AB hydrolase-1 domain; the sequence is PIVLIHGFGA…SAGHHVYADD (248 aa).

This sequence belongs to the peptidase S33 family. ABHD4/ABHD5 subfamily. As to quaternary structure, interacts with atgl-1; the interaction tethers atgl-1 to lipid droplets. As to expression, expressed in the hypodermis and intestine.

The protein resides in the lipid droplet. Its function is as follows. Acts coordinately with phospholipase atgl-1 within the lipolytic cascade to distribute stored energy to tissues to maintain energy levels during the dauer phase. Localizes atgl-1 to lipid droplets, possibly to facilitate triglyceride hydrolysis. Regulates lipid droplet size, lipid content, the exchange of lipids between lipid droplets and fusion of lipid droplets during the dauer phase. The polypeptide is Abhydrolase domain-containing protein abhd-5.2 (Caenorhabditis elegans).